A 631-amino-acid chain; its full sequence is 30-kDa cleavage and polyadenylation specificity factor 30 (631 aa).

The disordered stretch occupies residues 12–38 (EGGLDSGPVQNTASVPVAPPENSSSAA). 3 consecutive C3H1-type zinc fingers follow at residues 60–87 (SFRQ…HQFD), 88–112 (KARM…VYKH), and 114–141 (NEDI…HAKL). Positions 179–234 (QDRPQGQVPMQGQPQESGNLQQQQQQQPQQSQHQVSQTLIPNPADQTNRTSHPLPQ) are disordered. Residues 182 to 215 (PQGQVPMQGQPQESGNLQQQQQQQPQQSQHQVSQ) show a composition bias toward low complexity. The segment covering 216 to 231 (TLIPNPADQTNRTSHP) has biased composition (polar residues). A YTH domain is found at 237 to 372 (NRYFVVKSNN…SVGEQLASLL (136 aa)). The span at 392 to 407 (EEEKAKGVNPESRAEN) shows a compositional bias: basic and acidic residues. 2 disordered regions span residues 392–447 (EEEK…RGIM) and 541–631 (PHMG…KKRR). The segment covering 412–432 (PFEDNEEEEEEEDESEEEEES) has biased composition (acidic residues). The span at 573 to 583 (KTPERSDERGV) shows a compositional bias: basic and acidic residues. Residues serine 610 and serine 612 each carry the phosphoserine modification. Residues 621–631 (RSRHGEGKKRR) are compositionally biased toward basic residues.

This sequence belongs to the CPSF4/YTH1 family. Component of the cleavage and polyadenylation specificity factor (CPSF) complex. Can form homodimers. Binds to calmodulin. Forms a complex with cleavage and polyadenylation specificity factor (CPSF) subunits CPSF73-I, CPSF73-II, CPSF100, CPSF160, CFIS2, FIPS3, FIPS5, PAPS2, PAPS3, CLPS3, PCFS1, PCFS4, CSTF50 and CSTF77. Expressed in seedlings, roots, leaves, siliques, stems and flowers.

The protein localises to the nucleus. It is found in the cytoplasm. Its activity is regulated as follows. Endonuclease activity is repressed by the N-terminal domain of FIPS5. Nuclease activity is inhibited by zinc (&gt;100 uM), cadmium in a progressive manner (50 percent activity at 1 mM Cd(2+)), and high salt levels (e.g. KCl or NaCl &gt;600 mM). Stimulated by ATP in the presence of Zn(2+), even at inhibitory zinc concentrations. Elevated temperatures prevent RNA-binding at 55 degrees Celsius, but endonuclease activity at 70 degrees Celsius. The sulfhydryl reagent dithiothreitol (DTT) inhibits both RNA-binding and nuclease activities. Its function is as follows. Component of the cleavage and polyadenylation specificity factor (CPSF) complex that play a key role in pre-mRNA 3'-end formation. May interact with poly(A) polymerase and other factors to bring about cleavage and poly(A) addition. Mediates poly(A) site selection. Binds RNA in a calcium-dependent manner. Exhibits endonuclease activity with an ability to nick and degrade linear as well as circular single-stranded RNA that leaves RNA 3' ends with hydroxyl groups, thus mediating processing of the pre-mRNA as a prelude to the polyadenylation. Involved in the post-transcriptional control, probably via poly(A) addition, of the responses of plants to stress, especially genes mediating tolerance to oxidative stress. Plays a role in the regulation of salicylic acid (SA) production via the control of messenger RNA 3' end processing, thus being a key component of programmed cell death and plant immune responses required for resistance to virulent Pseudomonas syringae pv tomato DC3000 (Pst). In Arabidopsis thaliana (Mouse-ear cress), this protein is 30-kDa cleavage and polyadenylation specificity factor 30.